Consider the following 205-residue polypeptide: Guanylate kinase (205 aa).

The region spanning 6 to 185 is the Guanylate kinase-like domain; sequence GLLIVLSRPS…ACDRIKAIVV (180 aa). 13–20 is an ATP binding site; that stretch reads RPSGVGKG.

This sequence belongs to the guanylate kinase family.

Its subcellular location is the cytoplasm. The catalysed reaction is GMP + ATP = GDP + ADP. Its function is as follows. Essential for recycling GMP and indirectly, cGMP. The chain is Guanylate kinase from Bacillus cereus (strain ATCC 14579 / DSM 31 / CCUG 7414 / JCM 2152 / NBRC 15305 / NCIMB 9373 / NCTC 2599 / NRRL B-3711).